The primary structure comprises 226 residues: 2-C-methyl-D-erythritol 4-phosphate cytidylyltransferase (226 aa).

Belongs to the IspD/TarI cytidylyltransferase family. IspD subfamily.

It catalyses the reaction 2-C-methyl-D-erythritol 4-phosphate + CTP + H(+) = 4-CDP-2-C-methyl-D-erythritol + diphosphate. It participates in isoprenoid biosynthesis; isopentenyl diphosphate biosynthesis via DXP pathway; isopentenyl diphosphate from 1-deoxy-D-xylulose 5-phosphate: step 2/6. Catalyzes the formation of 4-diphosphocytidyl-2-C-methyl-D-erythritol from CTP and 2-C-methyl-D-erythritol 4-phosphate (MEP). The polypeptide is 2-C-methyl-D-erythritol 4-phosphate cytidylyltransferase (Bacillus thuringiensis (strain Al Hakam)).